The sequence spans 188 residues: MASYGMNDVKNGMKILVNAEPAVITDTEYVKPGKGQAFTRVKYRLIKSGRVQEVTMKSTDTLEAADVVDTDMQYLYSDGEYWHFMQQETFEQVQADKNGMGGAEKWLKGEEQCVVTLWNGVPIGVQPPNFVELKITETDPGLRGDTSGGGGKPATLETGAVVRVPLFVNQDEVIKVDTRSGEYVSRVK.

Lys34 carries the N6-(3,6-diaminohexanoyl)-5-hydroxylysine modification.

The protein belongs to the elongation factor P family. Post-translationally, may be beta-lysylated on the epsilon-amino group of Lys-34 by the combined action of EpmA and EpmB, and then hydroxylated on the C5 position of the same residue by EpmC (if this protein is present). Lysylation is critical for the stimulatory effect of EF-P on peptide-bond formation. The lysylation moiety may extend toward the peptidyltransferase center and stabilize the terminal 3-CCA end of the tRNA. Hydroxylation of the C5 position on Lys-34 may allow additional potential stabilizing hydrogen-bond interactions with the P-tRNA.

Its subcellular location is the cytoplasm. It functions in the pathway protein biosynthesis; polypeptide chain elongation. Involved in peptide bond synthesis. Alleviates ribosome stalling that occurs when 3 or more consecutive Pro residues or the sequence PPG is present in a protein, possibly by augmenting the peptidyl transferase activity of the ribosome. Modification of Lys-34 is required for alleviation. This Xylella fastidiosa (strain M23) protein is Elongation factor P.